The sequence spans 395 residues: Imidazolonepropionase (395 aa).

Fe(3+)-binding residues include His-72 and His-74. Residues His-72 and His-74 each coordinate Zn(2+). Positions 81, 144, and 174 each coordinate 4-imidazolone-5-propanoate. Residue Tyr-144 coordinates N-formimidoyl-L-glutamate. Position 231 (His-231) interacts with Fe(3+). His-231 is a Zn(2+) binding site. A 4-imidazolone-5-propanoate-binding site is contributed by Glu-234. A Fe(3+)-binding site is contributed by Asp-306. Position 306 (Asp-306) interacts with Zn(2+).

This sequence belongs to the metallo-dependent hydrolases superfamily. HutI family. It depends on Zn(2+) as a cofactor. Requires Fe(3+) as cofactor.

The protein resides in the cytoplasm. It catalyses the reaction 4-imidazolone-5-propanoate + H2O = N-formimidoyl-L-glutamate. The protein operates within amino-acid degradation; L-histidine degradation into L-glutamate; N-formimidoyl-L-glutamate from L-histidine: step 3/3. In terms of biological role, catalyzes the hydrolytic cleavage of the carbon-nitrogen bond in imidazolone-5-propanoate to yield N-formimidoyl-L-glutamate. It is the third step in the universal histidine degradation pathway. The chain is Imidazolonepropionase from Pyrobaculum arsenaticum (strain DSM 13514 / JCM 11321 / PZ6).